We begin with the raw amino-acid sequence, 162 residues long: uncharacterized protein (162 aa).

The first 21 residues, 1 to 21 (MRLCGLLIFLSYIVYVDNAVT), serve as a signal peptide directing secretion.

This is an uncharacterized protein from Caenorhabditis elegans.